A 394-amino-acid chain; its full sequence is Phosphopentomutase (394 aa).

Residues Asp13, Asp286, His291, Asp327, His328, and His339 each contribute to the Mn(2+) site.

This sequence belongs to the phosphopentomutase family. It depends on Mn(2+) as a cofactor.

The protein localises to the cytoplasm. It carries out the reaction 2-deoxy-alpha-D-ribose 1-phosphate = 2-deoxy-D-ribose 5-phosphate. It catalyses the reaction alpha-D-ribose 1-phosphate = D-ribose 5-phosphate. It participates in carbohydrate degradation; 2-deoxy-D-ribose 1-phosphate degradation; D-glyceraldehyde 3-phosphate and acetaldehyde from 2-deoxy-alpha-D-ribose 1-phosphate: step 1/2. In terms of biological role, isomerase that catalyzes the conversion of deoxy-ribose 1-phosphate (dRib-1-P) and ribose 1-phosphate (Rib-1-P) to deoxy-ribose 5-phosphate (dRib-5-P) and ribose 5-phosphate (Rib-5-P), respectively. This chain is Phosphopentomutase, found in Bacillus mycoides (strain KBAB4) (Bacillus weihenstephanensis).